A 66-amino-acid chain; its full sequence is Translational regulator CsrA (66 aa).

It belongs to the CsrA/RsmA family. As to quaternary structure, homodimer; the beta-strands of each monomer intercalate to form a hydrophobic core, while the alpha-helices form wings that extend away from the core.

The protein localises to the cytoplasm. Functionally, a key translational regulator that binds mRNA to regulate translation initiation and/or mRNA stability. Mediates global changes in gene expression, shifting from rapid growth to stress survival by linking envelope stress, the stringent response and the catabolite repression systems. Usually binds in the 5'-UTR; binding at or near the Shine-Dalgarno sequence prevents ribosome-binding, repressing translation, binding elsewhere in the 5'-UTR can activate translation and/or stabilize the mRNA. Its function is antagonized by small RNA(s). The polypeptide is Translational regulator CsrA (Alkalilimnicola ehrlichii (strain ATCC BAA-1101 / DSM 17681 / MLHE-1)).